A 461-amino-acid chain; its full sequence is UPF0210 protein LCABL_10110 (461 aa).

Belongs to the UPF0210 family. In terms of assembly, homodimer.

The protein is UPF0210 protein LCABL_10110 of Lacticaseibacillus casei (strain BL23) (Lactobacillus casei).